The sequence spans 624 residues: Glutamine--fructose-6-phosphate aminotransferase [isomerizing] (624 aa).

Cys2 (nucleophile; for GATase activity) is an active-site residue. In terms of domain architecture, Glutamine amidotransferase type-2 spans 2-226 (CGIVGYVGQQ…QDQAVVLTAD (225 aa)). SIS domains are found at residues 297 to 436 (SDQE…ARGT) and 469 to 614 (LAQR…VDKP). Residue Lys619 is the For Fru-6P isomerization activity of the active site.

As to quaternary structure, homodimer.

It localises to the cytoplasm. It catalyses the reaction D-fructose 6-phosphate + L-glutamine = D-glucosamine 6-phosphate + L-glutamate. Catalyzes the first step in hexosamine metabolism, converting fructose-6P into glucosamine-6P using glutamine as a nitrogen source. The protein is Glutamine--fructose-6-phosphate aminotransferase [isomerizing] of Mycolicibacterium paratuberculosis (strain ATCC BAA-968 / K-10) (Mycobacterium paratuberculosis).